Here is an 838-residue protein sequence, read N- to C-terminus: MVQLDVEKTIEELTLGEKVALTAGIDFWHTAAVPRLNIPSLRLSDGPNGVRGTRFFNGVPAACFPCATALGATWDTKLLHEVGRLMGEESIAKGTHVVLGPTINIQRSPLGGRGFESFAEDGVLSGILAGHYCKGLQETGVAATLKHFVCNDQEHERLAVDSIVTMRAMREIYLLPFQLAMRICKTACVMTAYNKINGTHVSENKQIITDILRKEWGWDGLVMSDWFGTYSTSDAINAGLDLEMPGPTRWRGTALAHAVSSNKAFEFVVDERVRNILNLHNFVEPLGIPENAPEKALNRPEDQALLRRAAAESVVLMKNQDNILPLKKEKPILVIGPNAKTAAYCGGGSASLDAYYTVTPFEGVSAQSQGEVKFSQGVYSYKELPLLGPLLKTDDGKKGFKFRVYNEPPSEPNRQLIDELHLESSSGFLMDYKHPKIKTFTFYVDMEGYFTPEEDGIYDFGVTVVGTGKLFVDDELVVDNSKNQRQGTAMFGNATVEEKGSKELKAGQTYKVVLQFGTAPTSDLDMRGVVIFGPGGFRFGAARRVSQEELISKAAELASQASQVVIFAGLTSEWETEGHDRDHMDLPPGSDEMISRVLDANPNAVVVIQSGTPVTMPWAHKAKALLQAWFGGNECGNGIADVLYGAVNPAAKLPLSFPVRLQDNPSYLNFRSERGRVLYGEDVYVGYRYYEKVDLAPLFPFGHGLSYTTFSRSDLSLATTPEKPQLEDGEPITATVSVTNTGSVAGAEIVQLWVAPPPTGVNRPVRELKGFAKVFLQPGETKKVEIVVEKKLATSWWDEQREKWASEKGTYEVLVTGTGDEVLKTSFEVGKTRYWLGL.

A glycan (N-linked (GlcNAc...) asparagine) is linked at N197. D225 is an active-site residue. One can recognise a PA14 domain in the interval 395-555; it reads DGKKGFKFRV…SQEELISKAA (161 aa). N493 carries an N-linked (GlcNAc...) asparagine glycan.

This sequence belongs to the glycosyl hydrolase 3 family.

The protein resides in the secreted. It carries out the reaction Hydrolysis of terminal, non-reducing beta-D-glucosyl residues with release of beta-D-glucose.. Its pathway is glycan metabolism; cellulose degradation. Its function is as follows. Beta-glucosidases are one of a number of cellulolytic enzymes involved in the degradation of cellulosic biomass. Catalyzes the last step releasing glucose from the inhibitory cellobiose. The protein is Probable beta-glucosidase I (bglI) of Neosartorya fischeri (strain ATCC 1020 / DSM 3700 / CBS 544.65 / FGSC A1164 / JCM 1740 / NRRL 181 / WB 181) (Aspergillus fischerianus).